Reading from the N-terminus, the 603-residue chain is Protein SHORT-ROOT 2 (603 aa).

2 disordered regions span residues 11 to 58 (HHHH…HSHS) and 106 to 140 (DFSS…SSAG). Residues 31 to 44 (SYPSSRGSTSSPSS) are compositionally biased toward low complexity. The span at 45–58 (HHTHNHTYYHHSHS) shows a compositional bias: basic residues. The segment covering 108 to 125 (SSSSSSRQFHSGTGAPSS) has biased composition (low complexity). One can recognise a GRAS domain in the interval 179 to 602 (AAPSSSGRWA…QPVVWASAWK (424 aa)). Residues 186-249 (RWAAQLLMEC…LTTSGPRTLR (64 aa)) are leucine repeat I (LRI). The interval 268 to 354 (ALKFQELSPW…DTPHLSITTV (87 aa)) is VHIID. A VHIID motif is present at residues 318-322 (LHILD). Residues 370–406 (EIGQRLEKFARLMGVPFSFRAVHHAGDLADLDLAALD) form a leucine repeat II (LRII) region. The tract at residues 416–514 (LAVNCVNALR…ERAVGRAIVD (99 aa)) is PFYRE. Positions 517-602 (SCPASQSAER…QPVVWASAWK (86 aa)) are SAW.

Belongs to the GRAS family. In terms of assembly, does not interact with SCR1.

It localises to the nucleus. Putative transcription factor involved in asymmetric cell division. In Oryza sativa subsp. indica (Rice), this protein is Protein SHORT-ROOT 2 (SHR2).